The chain runs to 276 residues: ARL14 effector protein (276 aa).

Residues 158–177 (KQTEFAPEGGKREKRKLTKA) are disordered. A Glycyl lysine isopeptide (Lys-Gly) (interchain with G-Cter in SUMO2) cross-link involves residue Lys-176. Phosphoserine occurs at positions 182 and 266.

As to quaternary structure, interacts with ARL14 and MYO1E.

The protein resides in the cytoplasm. Functionally, through its interaction with ARL14 and MYO1E, may connect MHC class II-containing cytoplasmic vesicles to the actin network and hence controls the movement of these vesicles along the actin cytoskeleton in dendritic cells. In Mus musculus (Mouse), this protein is ARL14 effector protein (Arl14ep).